A 456-amino-acid chain; its full sequence is Serine--tRNA ligase (456 aa).

Disordered stretches follow at residues 107–130 (PHSS…GTPP) and 229–253 (FLEN…QDDD). Over residues 114–125 (GRSESDNREVRR) the composition is skewed to basic and acidic residues. Residues 239–248 (LPSNSNSPQG) are compositionally biased toward polar residues. 260-262 (TSE) is an L-serine binding site. 291 to 293 (RSE) lines the ATP pocket. Residue E314 coordinates L-serine. An ATP-binding site is contributed by 378-381 (EISS). Residue S413 coordinates L-serine.

It belongs to the class-II aminoacyl-tRNA synthetase family. Type-1 seryl-tRNA synthetase subfamily. In terms of assembly, homodimer. The tRNA molecule binds across the dimer.

Its subcellular location is the cytoplasm. It carries out the reaction tRNA(Ser) + L-serine + ATP = L-seryl-tRNA(Ser) + AMP + diphosphate + H(+). The catalysed reaction is tRNA(Sec) + L-serine + ATP = L-seryl-tRNA(Sec) + AMP + diphosphate + H(+). It participates in aminoacyl-tRNA biosynthesis; selenocysteinyl-tRNA(Sec) biosynthesis; L-seryl-tRNA(Sec) from L-serine and tRNA(Sec): step 1/1. In terms of biological role, catalyzes the attachment of serine to tRNA(Ser). Is also able to aminoacylate tRNA(Sec) with serine, to form the misacylated tRNA L-seryl-tRNA(Sec), which will be further converted into selenocysteinyl-tRNA(Sec). This chain is Serine--tRNA ligase, found in Nitrosospira multiformis (strain ATCC 25196 / NCIMB 11849 / C 71).